A 308-amino-acid polypeptide reads, in one-letter code: Olfactory receptor OR9H1 (308 aa).

The Extracellular portion of the chain corresponds to 1 to 26 (MVNFTHVSEFVLLGFQGGPGMQAMLF). Residues 27–47 (LIFLILYGIAVVGNLGMIVII) traverse the membrane as a helical segment. Residues 48 to 58 (WVDAHLHTPMY) are Cytoplasmic-facing. Residues 59–81 (AFLQSLSLLDICYSSTIAPRALA) form a helical membrane-spanning segment. At 82-95 (NSMQEDHTISFGGC) the chain is on the extracellular side. C95 and C177 are joined by a disulfide. A helical transmembrane segment spans residues 96-116 (AAQFFFLSLFGITEAFLLAAM). The Cytoplasmic portion of the chain corresponds to 117-137 (AYDRFIAICNPLLYSVSMSHQ). A helical transmembrane segment spans residues 138–158 (VCVLLISGSYLWGVVNAIAQT). The Extracellular portion of the chain corresponds to 159–203 (TMTFRLPFCGSNEINDFFCDVPPLLSLSCSDTFINQLVLLGLCGS). The chain crosses the membrane as a helical span at residues 204–224 (IIVSTFLIVLVSYIYIISTIL). Residues 225–245 (RIPTMQGCQKAFSTCASHLTG) are Cytoplasmic-facing. The chain crosses the membrane as a helical span at residues 246-266 (VCLFFGTVFFMYAQPSAIFFM). Residues 267-269 (EQS) are Extracellular-facing. The chain crosses the membrane as a helical span at residues 270–290 (KIVSIFYTMVIPMLNPLIYSL). Residues 291–308 (RNKEVKQALRRSMQKLSL) are Cytoplasmic-facing.

It belongs to the G-protein coupled receptor 1 family.

The protein resides in the cell membrane. Functionally, odorant receptor. The protein is Olfactory receptor OR9H1 of Homo sapiens (Human).